The sequence spans 421 residues: Acyl-coenzyme A thioesterase 5 (421 aa).

Residues Ser-232, Asp-326, and His-360 each act as charge relay system in the active site. The Microbody targeting signal motif lies at 419-421; the sequence is AKL.

It belongs to the C/M/P thioester hydrolase family. Highly expressed in spleen, brain, testis and proximal and distal intestine; expressed at low level in the liver.

The protein resides in the peroxisome. The catalysed reaction is hexadecanoyl-CoA + H2O = hexadecanoate + CoA + H(+). The enzyme catalyses decanoyl-CoA + H2O = decanoate + CoA + H(+). It catalyses the reaction octanoyl-CoA + H2O = octanoate + CoA + H(+). It carries out the reaction dodecanoyl-CoA + H2O = dodecanoate + CoA + H(+). The catalysed reaction is tetradecanoyl-CoA + H2O = tetradecanoate + CoA + H(+). The enzyme catalyses octadecanoyl-CoA + H2O = octadecanoate + CoA + H(+). It catalyses the reaction eicosanoyl-CoA + H2O = eicosanoate + CoA + H(+). It carries out the reaction (9Z)-octadecenoyl-CoA + H2O = (9Z)-octadecenoate + CoA + H(+). The catalysed reaction is (9Z,12Z)-octadecadienoyl-CoA + H2O = (9Z,12Z)-octadecadienoate + CoA + H(+). The enzyme catalyses (5Z,8Z,11Z,14Z)-eicosatetraenoyl-CoA + H2O = (5Z,8Z,11Z,14Z)-eicosatetraenoate + CoA + H(+). It catalyses the reaction (9Z)-hexadecenoyl-CoA + H2O = (9Z)-hexadecenoate + CoA + H(+). It participates in lipid metabolism; fatty acid metabolism. Functionally, catalyzes the hydrolysis of acyl-CoAs into free fatty acids and coenzyme A (CoASH), regulating their respective intracellular levels. Mainly active on medium-chain acyl-CoAs. Seems to be involved in intraperoxisomal regulation of acyl-CoA levels, but not CoASH levels. May have a function in termination of beta-oxidation of fatty acids. This Mus musculus (Mouse) protein is Acyl-coenzyme A thioesterase 5 (Acot5).